The primary structure comprises 461 residues: Chromosomal replication initiator protein DnaA (461 aa).

Residues 1–87 (MAVSLWQQCI…IGSRPSAKPV (87 aa)) form a domain I, interacts with DnaA modulators region. The domain II stretch occupies residues 87–124 (VVQATAAVRTSRPVTREVTKPSFNTPHAEPMANANHRS). The disordered stretch occupies residues 99 to 125 (PVTREVTKPSFNTPHAEPMANANHRSN). The interval 125 to 341 (NINPTYQFDN…GALNRVIANA (217 aa)) is domain III, AAA+ region. ATP contacts are provided by glycine 169, glycine 171, lysine 172, and threonine 173. Residues 342–461 (NFTGRPITID…YANLIRTLSS (120 aa)) form a domain IV, binds dsDNA region.

It belongs to the DnaA family. Oligomerizes as a right-handed, spiral filament on DNA at oriC.

It localises to the cytoplasm. Its function is as follows. Plays an essential role in the initiation and regulation of chromosomal replication. ATP-DnaA binds to the origin of replication (oriC) to initiate formation of the DNA replication initiation complex once per cell cycle. Binds the DnaA box (a 9 base pair repeat at the origin) and separates the double-stranded (ds)DNA. Forms a right-handed helical filament on oriC DNA; dsDNA binds to the exterior of the filament while single-stranded (ss)DNA is stabiized in the filament's interior. The ATP-DnaA-oriC complex binds and stabilizes one strand of the AT-rich DNA unwinding element (DUE), permitting loading of DNA polymerase. After initiation quickly degrades to an ADP-DnaA complex that is not apt for DNA replication. Binds acidic phospholipids. This is Chromosomal replication initiator protein DnaA from Shewanella pealeana (strain ATCC 700345 / ANG-SQ1).